We begin with the raw amino-acid sequence, 185 residues long: Inner membrane-spanning protein YciB (185 aa).

Helical transmembrane passes span 19–39 (LGGVREAAIVLVVATILQIVI), 53–73 (IMASAVVFFGLLTAYFNEIRY), 76–96 (WKVTIINGLFAIVLLIAQFQF), 118–138 (TLNFGWAIFFIICMLVNIYIS), and 149–169 (FKSFGIIGMTVIATIISGVYI).

This sequence belongs to the YciB family.

It localises to the cell inner membrane. In terms of biological role, plays a role in cell envelope biogenesis, maintenance of cell envelope integrity and membrane homeostasis. This Haemophilus influenzae (strain PittEE) protein is Inner membrane-spanning protein YciB.